The following is a 431-amino-acid chain: Enolase (431 aa).

A (2R)-2-phosphoglycerate-binding site is contributed by glutamine 167. Glutamate 209 acts as the Proton donor in catalysis. Mg(2+) contacts are provided by aspartate 246, glutamate 290, and aspartate 316. Positions 341, 370, 371, and 392 each coordinate (2R)-2-phosphoglycerate. Lysine 341 serves as the catalytic Proton acceptor.

This sequence belongs to the enolase family. Component of the RNA degradosome, a multiprotein complex involved in RNA processing and mRNA degradation. Mg(2+) serves as cofactor.

Its subcellular location is the cytoplasm. It localises to the secreted. The protein localises to the cell surface. It catalyses the reaction (2R)-2-phosphoglycerate = phosphoenolpyruvate + H2O. The protein operates within carbohydrate degradation; glycolysis; pyruvate from D-glyceraldehyde 3-phosphate: step 4/5. Functionally, catalyzes the reversible conversion of 2-phosphoglycerate (2-PG) into phosphoenolpyruvate (PEP). It is essential for the degradation of carbohydrates via glycolysis. The polypeptide is Enolase (Shigella flexneri serotype 5b (strain 8401)).